The sequence spans 271 residues: Acetyl-coenzyme A carboxylase carboxyl transferase subunit alpha (271 aa).

Residues 1–247 (MSRELIRTAD…KKTILEALGE (247 aa)) enclose the CoA carboxyltransferase C-terminal domain.

The protein belongs to the AccA family. In terms of assembly, acetyl-CoA carboxylase is a heterohexamer composed of biotin carboxyl carrier protein (AccB), biotin carboxylase (AccC) and two subunits each of ACCase subunit alpha (AccA) and ACCase subunit beta (AccD).

The protein localises to the cytoplasm. It carries out the reaction N(6)-carboxybiotinyl-L-lysyl-[protein] + acetyl-CoA = N(6)-biotinyl-L-lysyl-[protein] + malonyl-CoA. The protein operates within lipid metabolism; malonyl-CoA biosynthesis; malonyl-CoA from acetyl-CoA: step 1/1. Functionally, component of the acetyl coenzyme A carboxylase (ACC) complex. First, biotin carboxylase catalyzes the carboxylation of biotin on its carrier protein (BCCP) and then the CO(2) group is transferred by the carboxyltransferase to acetyl-CoA to form malonyl-CoA. The polypeptide is Acetyl-coenzyme A carboxylase carboxyl transferase subunit alpha (Clostridium perfringens (strain ATCC 13124 / DSM 756 / JCM 1290 / NCIMB 6125 / NCTC 8237 / Type A)).